Reading from the N-terminus, the 213-residue chain is Orotate phosphoribosyltransferase (213 aa).

Lysine 26 lines the 5-phospho-alpha-D-ribose 1-diphosphate pocket. Residue 34 to 35 (FF) participates in orotate binding. Residues 72-73 (YK), arginine 99, lysine 100, lysine 103, histidine 105, and 124-132 (DDVITAGTA) each bind 5-phospho-alpha-D-ribose 1-diphosphate. Threonine 128 and arginine 156 together coordinate orotate.

This sequence belongs to the purine/pyrimidine phosphoribosyltransferase family. PyrE subfamily. Homodimer. Mg(2+) is required as a cofactor.

It carries out the reaction orotidine 5'-phosphate + diphosphate = orotate + 5-phospho-alpha-D-ribose 1-diphosphate. Its pathway is pyrimidine metabolism; UMP biosynthesis via de novo pathway; UMP from orotate: step 1/2. Functionally, catalyzes the transfer of a ribosyl phosphate group from 5-phosphoribose 1-diphosphate to orotate, leading to the formation of orotidine monophosphate (OMP). The polypeptide is Orotate phosphoribosyltransferase (Pectobacterium carotovorum subsp. carotovorum (strain PC1)).